The chain runs to 353 residues: UDP-3-O-acylglucosamine N-acyltransferase (353 aa).

The Proton acceptor role is filled by His-242.

Belongs to the transferase hexapeptide repeat family. LpxD subfamily. As to quaternary structure, homotrimer.

It catalyses the reaction a UDP-3-O-[(3R)-3-hydroxyacyl]-alpha-D-glucosamine + a (3R)-hydroxyacyl-[ACP] = a UDP-2-N,3-O-bis[(3R)-3-hydroxyacyl]-alpha-D-glucosamine + holo-[ACP] + H(+). Its pathway is bacterial outer membrane biogenesis; LPS lipid A biosynthesis. In terms of biological role, catalyzes the N-acylation of UDP-3-O-acylglucosamine using 3-hydroxyacyl-ACP as the acyl donor. Is involved in the biosynthesis of lipid A, a phosphorylated glycolipid that anchors the lipopolysaccharide to the outer membrane of the cell. This chain is UDP-3-O-acylglucosamine N-acyltransferase, found in Pseudomonas aeruginosa (strain LESB58).